A 507-amino-acid polypeptide reads, in one-letter code: Photosystem II CP47 reaction center protein (507 aa).

Residues Gly2–Pro16 lie on the Cytoplasmic side of the membrane. The helical transmembrane segment at Gly17–Leu39 threads the bilayer. Residues Tyr40–Glu94 lie on the Lumenal, thylakoid side of the membrane. The helical transmembrane segment at Gly95–Val116 threads the bilayer. Residues Phe117 to Asp134 are Cytoplasmic-facing. A helical transmembrane segment spans residues Leu135 to Thr159. The Lumenal, thylakoid portion of the chain corresponds to Gly160 to Gly196. The chain crosses the membrane as a helical span at residues Gly197 to Thr218. The Cytoplasmic segment spans residues Val219–Asn233. Residues Ile234–Thr255 traverse the membrane as a helical segment. The Lumenal, thylakoid segment spans residues Met256–Trp450. A helical transmembrane segment spans residues Phe451–Leu474. The Cytoplasmic portion of the chain corresponds to Phe475–Ala507.

Belongs to the PsbB/PsbC family. PsbB subfamily. In terms of assembly, PSII is composed of 1 copy each of membrane proteins PsbA, PsbB, PsbC, PsbD, PsbE, PsbF, PsbH, PsbI, PsbJ, PsbK, PsbL, PsbM, PsbT, PsbX, Psb30/Ycf12, peripheral proteins PsbO, CyanoQ (PsbQ), PsbU, PsbV and a large number of cofactors. It forms dimeric complexes. Contacts PsbQ. It depends on Binds multiple chlorophylls. PSII binds additional chlorophylls, carotenoids and specific lipids. as a cofactor.

The protein localises to the cellular thylakoid membrane. One of the components of the core complex of photosystem II (PSII). It binds chlorophyll and helps catalyze the primary light-induced photochemical processes of PSII. PSII is a light-driven water:plastoquinone oxidoreductase, using light energy to abstract electrons from H(2)O, generating O(2) and a proton gradient subsequently used for ATP formation. In Synechocystis sp. (strain ATCC 27184 / PCC 6803 / Kazusa), this protein is Photosystem II CP47 reaction center protein.